The primary structure comprises 406 residues: Tyrosine-protein phosphatase non-receptor type 2 (406 aa).

A Tyrosine-protein phosphatase domain is found at 5–275 (IEREFEELDA…RFSYMAIIEG (271 aa)). The residue at position 22 (tyrosine 22) is a Phosphotyrosine. A Phosphoserine modification is found at serine 52. Phosphotyrosine is present on tyrosine 68. Residues aspartate 182, 216 to 222 (CSAGIGR), and glutamine 260 each bind substrate. The active-site Phosphocysteine intermediate is the cysteine 216. An S-nitrosocysteine modification is found at cysteine 216. Serine 293, serine 298, serine 304, serine 320, and serine 339 each carry phosphoserine. The endoplasmic reticulum location stretch occupies residues 341-406 (ESILRKRIRE…ALVGWTLLFH (66 aa)). Residues 371–406 (ERKRKRWLYWQPILTKMGFVSVILVGALVGWTLLFH) form a mediates interaction with STX17 region.

It belongs to the protein-tyrosine phosphatase family. Non-receptor class 1 subfamily. In terms of assembly, interacts with RMDN3. Isoform 1 interacts with TMED9. Isoform 1 interacts with STX17; dephosphorylates STX17. Interacts with ITGA1 (via cytoplasmic domain); activates the phosphatase activity towards EGFR. Interacts with TRAF2; probably involved in tumor necrosis factor-mediated signaling. Interacts with MET. Interacts with FAM220A and STAT3; interaction with FAM220A promotes interaction of PTPN2 with transcriptional activator STAT3, leading to dephosphorylation of STAT3 by PTPN2 and negative regulation of STAT3 transcriptional activator activity. In terms of processing, specifically phosphorylated in a cell cycle-dependent manner by cyclin-dependent kinases CDK1 and CDK2. Probably activated through phosphorylation by PKR. As to expression, ubiquitously expressed. The highest expression levels were found in ovary, testis, thymus and kidney.

It is found in the endoplasmic reticulum. Its subcellular location is the endoplasmic reticulum-Golgi intermediate compartment. It localises to the nucleus. The protein localises to the cytoplasm. The protein resides in the cell membrane. The catalysed reaction is O-phospho-L-tyrosyl-[protein] + H2O = L-tyrosyl-[protein] + phosphate. Its function is as follows. Non-receptor type tyrosine-specific phosphatase that dephosphorylates receptor protein tyrosine kinases including INSR, EGFR, CSF1R, PDGFR. Also dephosphorylates non-receptor protein tyrosine kinases like JAK1, JAK2, JAK3, Src family kinases, STAT1, STAT3 and STAT6 either in the nucleus or the cytoplasm. Negatively regulates numerous signaling pathways and biological processes like hematopoiesis, inflammatory response, cell proliferation and differentiation, and glucose homeostasis. Plays a multifaceted and important role in the development of the immune system. Functions in T-cell receptor signaling through dephosphorylation of FYN and LCK to control T-cells differentiation and activation. Dephosphorylates CSF1R, negatively regulating its downstream signaling and macrophage differentiation. Negatively regulates cytokine (IL2/interleukin-2 and interferon)-mediated signaling through dephosphorylation of the cytoplasmic kinases JAK1, JAK3 and their substrate STAT1, that propagate signaling downstream of the cytokine receptors. Also regulates the IL6/interleukin-6 and IL4/interleukin-4 cytokine signaling through dephosphorylation of STAT3 and STAT6 respectively. In addition to the immune system, it is involved in anchorage-dependent, negative regulation of EGF-stimulated cell growth. Activated by the integrin ITGA1/ITGB1, it dephosphorylates EGFR and negatively regulates EGF signaling. Dephosphorylates PDGFRB and negatively regulates platelet-derived growth factor receptor-beta signaling pathway and therefore cell proliferation. Negatively regulates tumor necrosis factor-mediated signaling downstream via MAPK through SRC dephosphorylation. May also regulate the hepatocyte growth factor receptor signaling pathway through dephosphorylation of the hepatocyte growth factor receptor MET. Also plays an important role in glucose homeostasis. For instance, negatively regulates the insulin receptor signaling pathway through the dephosphorylation of INSR and control gluconeogenesis and liver glucose production through negative regulation of the IL6 signaling pathways. May also bind DNA. The protein is Tyrosine-protein phosphatase non-receptor type 2 (Ptpn2) of Mus musculus (Mouse).